A 111-amino-acid polypeptide reads, in one-letter code: Cell division protein FtsB (111 aa).

The Cytoplasmic portion of the chain corresponds to 1–3 (MGK). A helical transmembrane segment spans residues 4–21 (LTLLLLILLGWLQYSLWL). Topologically, residues 22-111 (GKNGIHDYVR…TNTPSNNIQR (90 aa)) are periplasmic. Residues 33 to 63 (KDDVVVQQGNNAKLKDRNEQLFAEIDDLNGG) are a coiled coil. The interval 90 to 111 (ESNHRNANTAPSTNTPSNNIQR) is disordered. Residues 95 to 111 (NANTAPSTNTPSNNIQR) show a composition bias toward low complexity.

The protein belongs to the FtsB family. As to quaternary structure, part of a complex composed of FtsB, FtsL and FtsQ.

Its subcellular location is the cell inner membrane. Its function is as follows. Essential cell division protein. May link together the upstream cell division proteins, which are predominantly cytoplasmic, with the downstream cell division proteins, which are predominantly periplasmic. The sequence is that of Cell division protein FtsB from Pectobacterium carotovorum subsp. carotovorum (strain PC1).